The following is a 142-amino-acid chain: MTHATPQELQAETREIIENLLNDGSDPNALYIIEHHIAHYDFDKLEKIAVDAFKAGYEVSDAEELEDDNGKPLYCFDIVAEVELKAEIIDAQQQQLVPLVAKHGGIYDGWGTYFEDPNADEDEYGEDGEFFDDEFADDDEKR.

The interval 117-142 is disordered; the sequence is PNADEDEYGEDGEFFDDEFADDDEKR.

This sequence belongs to the RraB family. As to quaternary structure, interacts with the C-terminal region of Rne.

Its subcellular location is the cytoplasm. Functionally, globally modulates RNA abundance by binding to RNase E (Rne) and regulating its endonucleolytic activity. Can modulate Rne action in a substrate-dependent manner by altering the composition of the degradosome. The chain is Regulator of ribonuclease activity B from Actinobacillus succinogenes (strain ATCC 55618 / DSM 22257 / CCUG 43843 / 130Z).